A 200-amino-acid chain; its full sequence is FMN-dependent NADH:quinone oxidoreductase (200 aa).

Residues S10 and 95–98 (MYNF) each bind FMN.

It belongs to the azoreductase type 1 family. Homodimer. The cofactor is FMN.

It carries out the reaction 2 a quinone + NADH + H(+) = 2 a 1,4-benzosemiquinone + NAD(+). The catalysed reaction is N,N-dimethyl-1,4-phenylenediamine + anthranilate + 2 NAD(+) = 2-(4-dimethylaminophenyl)diazenylbenzoate + 2 NADH + 2 H(+). Quinone reductase that provides resistance to thiol-specific stress caused by electrophilic quinones. In terms of biological role, also exhibits azoreductase activity. Catalyzes the reductive cleavage of the azo bond in aromatic azo compounds to the corresponding amines. The polypeptide is FMN-dependent NADH:quinone oxidoreductase (Alteromonas mediterranea (strain DSM 17117 / CIP 110805 / LMG 28347 / Deep ecotype)).